The primary structure comprises 120 residues: Putative ferric transport system permease-like protein AfuB (120 aa).

At M1–A38 the chain is on the cytoplasmic side. One can recognise an ABC transmembrane type-1 domain in the interval M1–F102. Residues I39–F59 form a helical membrane-spanning segment. Topologically, residues L60–Y81 are periplasmic. The helical transmembrane segment at G82–F102 threads the bilayer. The Cytoplasmic segment spans residues D103–A120.

It belongs to the binding-protein-dependent transport system permease family. FbpB subfamily.

The protein localises to the cell inner membrane. Its function is as follows. A severely truncated paralog of the AfuB uptake protein, homologous only to the last 20% of the intact protein in Actinobacillus. This Escherichia coli (strain K12) protein is Putative ferric transport system permease-like protein AfuB (afuB).